The sequence spans 549 residues: Chaperonin GroEL (549 aa).

ATP contacts are provided by residues 30 to 33 (TLGP), lysine 51, 87 to 91 (DGTTT), glycine 415, and aspartate 495.

This sequence belongs to the chaperonin (HSP60) family. As to quaternary structure, forms a cylinder of 14 subunits composed of two heptameric rings stacked back-to-back. Interacts with the co-chaperonin GroES.

The protein localises to the cytoplasm. It catalyses the reaction ATP + H2O + a folded polypeptide = ADP + phosphate + an unfolded polypeptide.. Functionally, together with its co-chaperonin GroES, plays an essential role in assisting protein folding. The GroEL-GroES system forms a nano-cage that allows encapsulation of the non-native substrate proteins and provides a physical environment optimized to promote and accelerate protein folding. In Colwellia maris, this protein is Chaperonin GroEL.